Consider the following 567-residue polypeptide: Frizzled-7 (567 aa).

Residues 1–31 (MRPAAGEAGAGLRWLGLAALLAALLGTPCAA) form the signal peptide. Residues 32-250 (AHHEDKAISV…EAEVRFARLW (219 aa)) are Extracellular-facing. The FZ domain occupies 42–161 (PDHGFCQPIS…HGAGEICVGQ (120 aa)). 5 disulfides stabilise this stretch: cysteine 47-cysteine 108, cysteine 55-cysteine 101, cysteine 92-cysteine 129, cysteine 118-cysteine 158, and cysteine 122-cysteine 146. N-linked (GlcNAc...) asparagine glycosylation is present at asparagine 61. N-linked (GlcNAc...) asparagine glycosylation occurs at asparagine 162. A helical transmembrane segment spans residues 251 to 271 (VGVWSVLCCASTLFTVLTYLV). Residues 272 to 282 (DMRRFSYPERP) lie on the Cytoplasmic side of the membrane. Residues 283–303 (IIFLSGCYFMVAVAYAAGFLL) form a helical membrane-spanning segment. At 304–330 (EERVVCLERFSEDGYRTVAQGTKKEGC) the chain is on the extracellular side. Residues 331 to 351 (TILFMILYFFGMASSIWWVIL) traverse the membrane as a helical segment. Topologically, residues 352–373 (SLTWFLAAGMKWGHEAIEANSQ) are cytoplasmic. The chain crosses the membrane as a helical span at residues 374 to 394 (YFHLAAWAVPAVKTITILAMG). At 395 to 417 (QVDGDVLSGVCYVGIYSVDSLRG) the chain is on the extracellular side. Residues 418–438 (FVLAPLFVYLFIGTSFLLAGF) traverse the membrane as a helical segment. Topologically, residues 439-464 (VSLFRIRTIMKHDGTKTEKLEKLMVR) are cytoplasmic. A helical membrane pass occupies residues 465-485 (IGVFSVLYTVPATIVVACYFY). Residues 486 to 521 (EQAFRSTWEKTWLLQTCKTYAVPCPSHFAPMSPDFT) lie on the Extracellular side of the membrane. The chain crosses the membrane as a helical span at residues 522–542 (VFMIKYLMTMIVGITTGFWIW). Residues 543–567 (SGKTLQSWRRFYHRLSTGSKGETAV) are Cytoplasmic-facing. Positions 545–550 (KTLQSW) match the Lys-Thr-X-X-X-Trp motif, mediates interaction with the PDZ domain of Dvl family members motif. Positions 565-567 (TAV) match the PDZ-binding motif.

It belongs to the G-protein coupled receptor Fz/Smo family. In terms of tissue distribution, expressed broadly in cranial ectoderm. Also expressed in the developing somites and in other cranial placodes, including the olfactory, lens, otic placodes (lateral half of the vesicle) and epibranchial placodes. Low level of expression in all the mesoderm derivatives in the limb buds.

It is found in the cell membrane. The protein resides in the endosome membrane. In terms of biological role, receptor for Wnt proteins. Most of frizzled receptors are coupled to the beta-catenin canonical signaling pathway, which leads to the activation of disheveled proteins, inhibition of GSK-3 kinase, nuclear accumulation of beta-catenin and activation of Wnt target genes. A second signaling pathway involving PKC and calcium fluxes has been seen for some family members, but it is not yet clear if it represents a distinct pathway or if it can be integrated in the canonical pathway, as PKC seems to be required for Wnt-mediated inactivation of GSK-3 kinase. Both pathways seem to involve interactions with G-proteins. May be involved in transduction and intercellular transmission of polarity information during tissue morphogenesis and/or in differentiated tissues. In Gallus gallus (Chicken), this protein is Frizzled-7 (FZD7).